The following is a 240-amino-acid chain: Ribosomal RNA large subunit methyltransferase E (240 aa).

The interval 1–28 (MSSSPRSPDARPLKVRVKSARTRSSSSQ) is disordered. Positions 80, 82, 103, 119, and 143 each coordinate S-adenosyl-L-methionine. The active-site Proton acceptor is the lysine 183.

This sequence belongs to the class I-like SAM-binding methyltransferase superfamily. RNA methyltransferase RlmE family.

It is found in the cytoplasm. It catalyses the reaction uridine(2552) in 23S rRNA + S-adenosyl-L-methionine = 2'-O-methyluridine(2552) in 23S rRNA + S-adenosyl-L-homocysteine + H(+). Its function is as follows. Specifically methylates the uridine in position 2552 of 23S rRNA at the 2'-O position of the ribose in the fully assembled 50S ribosomal subunit. The sequence is that of Ribosomal RNA large subunit methyltransferase E from Azorhizobium caulinodans (strain ATCC 43989 / DSM 5975 / JCM 20966 / LMG 6465 / NBRC 14845 / NCIMB 13405 / ORS 571).